Consider the following 179-residue polypeptide: Interleukin-10 (179 aa).

The N-terminal stretch at 1-19 (MPSSSALLCCLVFLAGVAA) is a signal peptide. Disulfide bonds link cysteine 31–cysteine 127 and cysteine 81–cysteine 133. An N-linked (GlcNAc...) asparagine glycan is attached at asparagine 135.

It belongs to the IL-10 family. In terms of assembly, homodimer. Interacts with IL10RA and IL10RB.

The protein resides in the secreted. Major immune regulatory cytokine that acts on many cells of the immune system where it has profound anti-inflammatory functions, limiting excessive tissue disruption caused by inflammation. Mechanistically, IL10 binds to its heterotetrameric receptor comprising IL10RA and IL10RB leading to JAK1 and STAT2-mediated phosphorylation of STAT3. In turn, STAT3 translocates to the nucleus where it drives expression of anti-inflammatory mediators. Targets antigen-presenting cells (APCs) such as macrophages and monocytes and inhibits their release of pro-inflammatory cytokines including granulocyte-macrophage colony-stimulating factor /GM-CSF, granulocyte colony-stimulating factor/G-CSF, IL-1 alpha, IL-1 beta, IL-6, IL-8 and TNF-alpha. Also interferes with antigen presentation by reducing the expression of MHC-class II and co-stimulatory molecules, thereby inhibiting their ability to induce T cell activation. In addition, controls the inflammatory response of macrophages by reprogramming essential metabolic pathways including mTOR signaling. The sequence is that of Interleukin-10 (IL10) from Cervus elaphus (Red deer).